Here is a 261-residue protein sequence, read N- to C-terminus: NAD(P)H-quinone oxidoreductase subunit K, chloroplastic (261 aa).

Positions 43, 44, 108, and 139 each coordinate [4Fe-4S] cluster.

The protein belongs to the complex I 20 kDa subunit family. NDH is composed of at least 16 different subunits, 5 of which are encoded in the nucleus. [4Fe-4S] cluster is required as a cofactor.

The protein resides in the plastid. The protein localises to the chloroplast thylakoid membrane. The catalysed reaction is a plastoquinone + NADH + (n+1) H(+)(in) = a plastoquinol + NAD(+) + n H(+)(out). It catalyses the reaction a plastoquinone + NADPH + (n+1) H(+)(in) = a plastoquinol + NADP(+) + n H(+)(out). Its function is as follows. NDH shuttles electrons from NAD(P)H:plastoquinone, via FMN and iron-sulfur (Fe-S) centers, to quinones in the photosynthetic chain and possibly in a chloroplast respiratory chain. The immediate electron acceptor for the enzyme in this species is believed to be plastoquinone. Couples the redox reaction to proton translocation, and thus conserves the redox energy in a proton gradient. This Cycas taitungensis (Prince sago) protein is NAD(P)H-quinone oxidoreductase subunit K, chloroplastic.